A 153-amino-acid polypeptide reads, in one-letter code: Transcriptional repressor NrdR (153 aa).

A zinc finger lies at 3-34; sequence CPFCNNISTNVKDSRSIEDDMLIRRRRVCPVC. The ATP-cone domain occupies 49-139; sequence LMVIKKNGGL…VYMNFKNIND (91 aa).

This sequence belongs to the NrdR family. Requires Zn(2+) as cofactor.

Functionally, negatively regulates transcription of bacterial ribonucleotide reductase nrd genes and operons by binding to NrdR-boxes. The sequence is that of Transcriptional repressor NrdR from Ehrlichia ruminantium (strain Gardel).